The sequence spans 236 residues: 2,3,4,5-tetrahydropyridine-2,6-dicarboxylate N-acetyltransferase (236 aa).

The protein belongs to the transferase hexapeptide repeat family. DapH subfamily.

The catalysed reaction is (S)-2,3,4,5-tetrahydrodipicolinate + acetyl-CoA + H2O = L-2-acetamido-6-oxoheptanedioate + CoA. Its pathway is amino-acid biosynthesis; L-lysine biosynthesis via DAP pathway; LL-2,6-diaminopimelate from (S)-tetrahydrodipicolinate (acetylase route): step 1/3. In terms of biological role, catalyzes the transfer of an acetyl group from acetyl-CoA to tetrahydrodipicolinate. This Geobacillus thermodenitrificans (strain NG80-2) protein is 2,3,4,5-tetrahydropyridine-2,6-dicarboxylate N-acetyltransferase.